The sequence spans 428 residues: D-amino acid dehydrogenase (428 aa).

Val3–Tyr17 lines the FAD pocket.

It belongs to the DadA oxidoreductase family. FAD serves as cofactor.

The catalysed reaction is a D-alpha-amino acid + A + H2O = a 2-oxocarboxylate + AH2 + NH4(+). It participates in amino-acid degradation; D-alanine degradation; NH(3) and pyruvate from D-alanine: step 1/1. Its function is as follows. Oxidative deamination of D-amino acids. This Burkholderia pseudomallei (strain K96243) protein is D-amino acid dehydrogenase.